The following is a 2587-amino-acid chain: Fap1 adhesin (2587 aa).

The first 85 residues, 1-85, serve as a signal peptide directing secretion; that stretch reads MGKYKRAGET…ATVVSGNVFA (85 aa). Disordered regions lie at residues 107-158, 173-212, 515-539, and 568-2558; these read SSEN…SESV, SISE…DSVR, DSIP…KSIS, and ESIT…GENV. The segment at 107–195 is ser-rich region 1, SRR1; sequence SSENFDSEKA…IVLSESGAAS (89 aa). 2 stretches are compositionally biased toward low complexity: residues 121–158 and 173–191; these read SLSQ…SESV and SISE…LSES. Residues 191–522 form a sufficient to block adherence to beads region; the sequence is SGAASGNKAT…NADSIPSDTT (332 aa). Residues 192 to 202 show a composition bias toward polar residues; sequence GAASGNKATSK. The segment covering 203 to 212 has biased composition (basic and acidic residues); the sequence is GTEEKQDSVR. Residues 516–2561 form a ser-rich region 2, SRR2 region; that stretch reads SIPSDTTSQS…PNTGENVSSS (2046 aa). 2 stretches are compositionally biased toward low complexity: residues 519-539 and 568-2545; these read SDTT…KSIS and ESIT…VSES. The tract at residues 2367–2587 is required for localization to cell wall, fimbriae formation and adherence to saliva-coated hydroxyapatite beads (SHA) but not secretion; it reads SESISESVSE…RKKRKSEDAE (221 aa). Residues 2551 to 2555 carry the LPXTG sorting signal motif; it reads LPNTG. Position 2554 is a pentaglycyl murein peptidoglycan amidated threonine (T2554). A propeptide spans 2555–2587 (removed by sortase); it reads GENVSSSLGLVGLSGLLFGALLGRKKRKSEDAE.

Belongs to the serine-rich repeat protein (SRRP) family. In terms of processing, glycosylated; occurs within the cytoplasm. It is probable that most of the Ser residues in SSR1 and SSR2 are O-GlcNAcylated. Sequential glycosylation by sugar transferases are able to generate complex sugar polymorphisms.

The protein resides in the cytoplasm. The protein localises to the secreted. It localises to the cell wall. It is found in the fimbrium. Its function is as follows. The major structural element of fimbriae. Required for adherence to saliva-coated hydroxyapatite beads (SHA), an in vitro tooth model. A Fap1-dependent increase in adherence is seen as the pH is reduced from pH 8 to pH 5. The polypeptide is Fap1 adhesin (fap1) (Streptococcus parasanguinis).